Reading from the N-terminus, the 918-residue chain is Glutamate receptor ionotropic, kainate 1 (918 aa).

Positions 1–30 (MELGTLLAQPGLWTRDTSWALLYFLCYILP) are cleaved as a signal peptide. Residues 31 to 576 (QTAPQVLRIG…VFSFLNPLSP (546 aa)) are Extracellular-facing. N-linked (GlcNAc...) asparagine glycosylation is found at Asn-68, Asn-74, Asn-276, Asn-379, Asn-428, Asn-439, and Asn-446. Pro-531, Thr-533, and Arg-538 together coordinate L-glutamate. Asn-561 carries N-linked (GlcNAc...) asparagine glycosylation. The chain crosses the membrane as a helical span at residues 577 to 597 (DIWMYVLLACLGVSCVLFVIA). Topologically, residues 598-653 (RFTPYEWYNPHPCNPDSDVVENNFTLLNSFWFGVGALMQQGSELMPKALSTRIVGG) are cytoplasmic. Residues 654–674 (IWWFFTLIIISSYTANLAAFL) form a helical membrane-spanning segment. Over 675–834 (TVERMESPID…KEASALGVEN (160 aa)) the chain is Extracellular. L-glutamate is bound by residues Ser-704 and Thr-705. Ser-725 carries the phosphoserine; by PKC modification. Glu-753 contacts L-glutamate. Position 761 is a phosphothreonine; by PKC (Thr-761). A disulfide bridge connects residues Cys-765 and Cys-819. Residue Asn-766 is glycosylated (N-linked (GlcNAc...) asparagine). The helical transmembrane segment at 835–855 (IGGIFIVLAAGLVLSVFVAIG) threads the bilayer. At 856–918 (EFIYKSRKNN…IRKQSSVHTV (63 aa)) the chain is on the cytoplasmic side.

It belongs to the glutamate-gated ion channel (TC 1.A.10.1) family. GRIK1 subfamily. As to quaternary structure, homotetramer or heterotetramer of pore-forming glutamate receptor subunits. Tetramers may be formed by the dimerization of dimers. Can form functional heteromeric receptors with GRIK4 and GRIK5. Interacts with KLHL17.

It localises to the cell membrane. It is found in the postsynaptic cell membrane. It carries out the reaction Ca(2+)(in) = Ca(2+)(out). In terms of biological role, ionotropic glutamate receptor that functions as a cation-permeable ligand-gated ion channel, gated by L-glutamate and the glutamatergic agonist kainic acid. L-glutamate acts as an excitatory neurotransmitter at many synapses in the central nervous system. Binding of the excitatory neurotransmitter L-glutamate induces a conformation change, leading to the opening of the cation channel, and thereby converts the chemical signal to an electrical impulse. The receptor then desensitizes rapidly and enters a transient inactive state, characterized by the presence of bound agonist. The protein is Glutamate receptor ionotropic, kainate 1 (GRIK1) of Macaca fascicularis (Crab-eating macaque).